The sequence spans 1049 residues: ABC transporter ATM1 (1049 aa).

The transit peptide at 1–90 (MRSFYNKCFT…NIFKNKGRLY (90 aa)) directs the protein to the mitochondrion. Helical transmembrane passes span 357–377 (IFCSLFFLLCSKMAIIYTPIL), 397–419 (IYSTNKSSVLLLCAYVFSRVLSS), 481–501 (VMVFQIIPIIIEFILYLYILT), 506–526 (YTVSLVTCFNMFLYVLFTTLI), 591–611 (FLNFGQQIILNTNLFLCMYLT), and 619–639 (IFPFSYLILVNTLLFQLAMPL). Residues 360–651 (SLFFLLCSKM…FGTIYRETKL (292 aa)) enclose the ABC transmembrane type-1 domain. The ABC transporter domain maps to 807-1043 (LKNHKIINNS…NHFYREYYDS (237 aa)). Position 843 to 850 (843 to 850 (GKSGSGKS)) interacts with ATP.

It belongs to the ABC transporter superfamily. ABCB family. Heavy Metal importer (TC 3.A.1.210) subfamily. As to quaternary structure, homodimer. Interacts with ISCU. Interacts with IscA2. Interacts with NBP35. Interacts with mHCF101.

The protein localises to the mitochondrion membrane. Its activity is regulated as follows. ATPase activity is stimulated by reduced glutathione. Functionally, transports glutathione-coordinated [4Fe-4S] iron-sulfur clusters in an ATP-dependent manner. Required for optimal parasite growth during erythrocytic stages. In Plasmodium falciparum (isolate 3D7), this protein is ABC transporter ATM1.